The sequence spans 314 residues: tRNA N6-adenosine threonylcarbamoyltransferase (314 aa).

Residues histidine 106, histidine 110, and tyrosine 127 each contribute to the Fe cation site. Residues 127 to 131 (YVSGA), aspartate 159, glycine 172, glutamate 176, and asparagine 255 contribute to the substrate site. Residue aspartate 283 coordinates Fe cation.

Belongs to the KAE1 / TsaD family. It depends on Fe(2+) as a cofactor.

It localises to the cytoplasm. The enzyme catalyses L-threonylcarbamoyladenylate + adenosine(37) in tRNA = N(6)-L-threonylcarbamoyladenosine(37) in tRNA + AMP + H(+). In terms of biological role, required for the formation of a threonylcarbamoyl group on adenosine at position 37 (t(6)A37) in tRNAs that read codons beginning with adenine. Is probably involved in the transfer of the threonylcarbamoyl moiety of threonylcarbamoyl-AMP (TC-AMP) to the N6 group of A37. This chain is tRNA N6-adenosine threonylcarbamoyltransferase, found in Nanoarchaeum equitans (strain Kin4-M).